A 770-amino-acid polypeptide reads, in one-letter code: Probable methyltransferase PMT24 (770 aa).

The Cytoplasmic portion of the chain corresponds to 1-17 (MAMGKYSRVDGKKSSGY). Residues 18–38 (GLTITIVLIVSLCLVGAWMFM) form a helical; Signal-anchor for type II membrane protein membrane-spanning segment. The Lumenal segment spans residues 39-770 (SSWSAPTESI…EAETIQSAIA (732 aa)). Composition is skewed to basic and acidic residues over residues 54–81 (ERTK…FPDE) and 93–164 (NEEK…KSED). The interval 54-223 (ERTKDVDTTK…STGSGAWSTQ (170 aa)) is disordered. 2 N-linked (GlcNAc...) asparagine glycosylation sites follow: asparagine 160 and asparagine 166. The span at 212-223 (ESSTGSGAWSTQ) shows a compositional bias: polar residues. 2 N-linked (GlcNAc...) asparagine glycosylation sites follow: asparagine 244 and asparagine 363.

Belongs to the methyltransferase superfamily.

It is found in the golgi apparatus membrane. The polypeptide is Probable methyltransferase PMT24 (Arabidopsis thaliana (Mouse-ear cress)).